The following is a 646-amino-acid chain: MSYTGFVQGSETTLQSTYSDTSAQPTCDYGYGTWNSGTNRGYEGYGYGYGYGQDNTTNYGYGMATSHSWEMPSSDTNANTSASGSASADSVLSRINQRLDMVPHLETDMMQGGVYGSGGERYDSYESCDSRAVLSERDLYRSGYDYSELDPEMEMAYEGQYDAYRDQFRMRGNDTFGPRAQGWARDARSGRPMASGYGRMWEDPMGARGQCMSGASRLPSLFSQNIIPEYGMFQGMRGGGAFPGGSRFGFGFGNGMKQMRRTWKTWTTADFRTKKKKRKQGGSPDEPDSKATRTDCSDNSDSDNDEGTEGEATEGLEGTEAVEKGSRVDGEDEEGKEDGREEGKEDPEKGALTTQDENGQTKRKLQAGKKSQDKQKKRQRDRMVERIQFVCSLCKYRTFYEDEMASHLDSKFHKEHFKYVGTKLPKQTADFLQEYVTNKTKKTEELRKTVEDLDGLIQQIYRDQDLTQEIAMEHFVKKVEAAHCAACDLFIPMQFGIIQKHLKTMDHNRNRRLMMEQSKKSSLMVARSILNNKLISKKLERYLKGENPFTDSPEEEKEQEEAEGGALDEGAQGEAAGISEGAEGVPAQPPVPPEPAPGAVSPPPPPPPEEEEEGAVPLLGGALQRQIRGIPGLDVEDDEEGGGGAP.

The tract at residues 1–268 is sufficient for activation of CTE-mediated expression; the sequence is MSYTGFVQGS…MRRTWKTWTT (268 aa). At Arg-208 the chain carries Asymmetric dimethylarginine; alternate. Arg-208 is subject to Omega-N-methylarginine; alternate. An omega-N-methylarginine mark is found at Arg-217, Arg-237, and Arg-247. Lys-257 carries the post-translational modification N6-acetyllysine. A disordered region spans residues 264-381; that stretch reads KTWTTADFRT…QDKQKKRQRD (118 aa). Phosphothreonine is present on Thr-267. A Nuclear localization signal motif is present at residues 274-279; it reads KKKKRK. A Nuclear export signal (NES) motif is present at residues 280 to 296; it reads QGGSPDEPDSKATRTDC. At Ser-283 the chain carries Phosphoserine. The segment covering 287-296 has biased composition (basic and acidic residues); it reads PDSKATRTDC. Thr-292 is subject to Phosphothreonine. Ser-297 carries the phosphoserine modification. The segment covering 298 to 314 has biased composition (acidic residues); that stretch reads DNSDSDNDEGTEGEATE. Over residues 337-349 the composition is skewed to basic and acidic residues; it reads EDGREEGKEDPEK. The Nuclear localization signal motif lies at 362–364; sequence KRK. C2H2 AKAP95-type zinc fingers lie at residues 391 to 413 and 484 to 507; these read CSLC…SKFH and CAAC…TMDH. The segment at 545 to 646 is disordered; sequence GENPFTDSPE…DDEEGGGGAP (102 aa). A Phosphoserine modification is found at Ser-552. The span at 552–563 shows a compositional bias: acidic residues; that stretch reads SPEEEKEQEEAE. Low complexity predominate over residues 564 to 586; the sequence is GGALDEGAQGEAAGISEGAEGVP. A compositionally biased stretch (pro residues) spans 587–607; the sequence is AQPPVPPEPAPGAVSPPPPPP. Over residues 634-646 the composition is skewed to acidic residues; the sequence is DVEDDEEGGGGAP.

It belongs to the AKAP95 family. As to quaternary structure, interacts (via N-terminus) with DHX9 (via RGG region). Interacts with TMPO isoform Beta, PRPF40A, RNF43, lamin-B. Interacts with HDAC3; increased during mitosis. Interacts with EBV EBNA-LP. Interacts with HIV-1 reverse transcriptase/ribonuclease H. Post-translationally, phosphorylated on serine or threonine residues possibly by PKA; probably modulating the interaction with TMPO isoform Beta. In terms of tissue distribution, ubiquitously expressed. Expressed in the brain cortex (at protein level).

It is found in the nucleus. The protein resides in the nucleus matrix. Its subcellular location is the nucleus speckle. It localises to the PML body. The protein localises to the cytoplasm. Could play a role in constitutive transport element (CTE)-mediated gene expression by association with DHX9. Increases CTE-dependent nuclear unspliced mRNA export. Proposed to target PRKACA to the nucleus but does not seem to be implicated in the binding of regulatory subunit II of PKA. May be involved in nuclear envelope breakdown and chromatin condensation. May be involved in anchoring nuclear membranes to chromatin in interphase and in releasing membranes from chromating at mitosis. May regulate the initiation phase of DNA replication when associated with TMPO isoform Beta. Required for cell cycle G2/M transition and histone deacetylation during mitosis. In mitotic cells recruits HDAC3 to the vicinity of chromatin leading to deacetylation and subsequent phosphorylation at 'Ser-10' of histone H3; in this function seems to act redundantly with AKAP8. May be involved in regulation of pre-mRNA splicing. In terms of biological role, (Microbial infection) In case of EBV infection, may target PRKACA to EBNA-LP-containing nuclear sites to modulate transcription from specific promoters. Its function is as follows. (Microbial infection) Can synergize with DHX9 to activate the CTE-mediated gene expression of type D retroviruses. Functionally, (Microbial infection) In case of HIV-1 infection, involved in the DHX9-promoted annealing of host tRNA(Lys3) to viral genomic RNA as a primer in reverse transcription; in vitro negatively regulates DHX9 annealing activity. The chain is A-kinase anchor protein 8-like (AKAP8L) from Homo sapiens (Human).